We begin with the raw amino-acid sequence, 313 residues long: Porphobilinogen deaminase (313 aa).

The residue at position 242 (Cys242) is an S-(dipyrrolylmethanemethyl)cysteine.

The protein belongs to the HMBS family. As to quaternary structure, monomer. The cofactor is dipyrromethane.

The enzyme catalyses 4 porphobilinogen + H2O = hydroxymethylbilane + 4 NH4(+). Its pathway is porphyrin-containing compound metabolism; protoporphyrin-IX biosynthesis; coproporphyrinogen-III from 5-aminolevulinate: step 2/4. In terms of biological role, tetrapolymerization of the monopyrrole PBG into the hydroxymethylbilane pre-uroporphyrinogen in several discrete steps. The chain is Porphobilinogen deaminase from Pseudomonas entomophila (strain L48).